Consider the following 156-residue polypeptide: Putative pre-16S rRNA nuclease (156 aa).

The protein belongs to the YqgF nuclease family.

It is found in the cytoplasm. Its function is as follows. Could be a nuclease involved in processing of the 5'-end of pre-16S rRNA. In Streptomyces avermitilis (strain ATCC 31267 / DSM 46492 / JCM 5070 / NBRC 14893 / NCIMB 12804 / NRRL 8165 / MA-4680), this protein is Putative pre-16S rRNA nuclease.